A 114-amino-acid polypeptide reads, in one-letter code: Probable 4-amino-4-deoxy-L-arabinose-phosphoundecaprenol flippase subunit ArnE (114 aa).

Helical transmembrane passes span 41–61 (PWLIASVAALGCGMLLWIYLL), 64–84 (LPLSMAYPMLSINLVLVLVGS), and 94–114 (YHNWLGVGAIIVGALLLGGLL). The 70-residue stretch at 43-112 (LIASVAALGC…IIVGALLLGG (70 aa)) folds into the EamA domain.

It belongs to the ArnE family. As to quaternary structure, heterodimer of ArnE and ArnF.

The protein resides in the cell inner membrane. The protein operates within bacterial outer membrane biogenesis; lipopolysaccharide biosynthesis. Translocates 4-amino-4-deoxy-L-arabinose-phosphoundecaprenol (alpha-L-Ara4N-phosphoundecaprenol) from the cytoplasmic to the periplasmic side of the inner membrane. The sequence is that of Probable 4-amino-4-deoxy-L-arabinose-phosphoundecaprenol flippase subunit ArnE from Aeromonas hydrophila subsp. hydrophila (strain ATCC 7966 / DSM 30187 / BCRC 13018 / CCUG 14551 / JCM 1027 / KCTC 2358 / NCIMB 9240 / NCTC 8049).